The chain runs to 307 residues: Protein FAM76A (307 aa).

Disordered regions lie at residues 142-195 and 287-307; these read QRKH…ESIT and KQAAALSKSKKSEKSGAITSP. A compositionally biased stretch (polar residues) spans 161-182; the sequence is SRLSGGSHYNSQKTLSTSSIQN. Residues 217 to 299 adopt a coiled-coil conformation; that stretch reads IIAQLKEEVA…AALSKSKKSE (83 aa).

Belongs to the FAM76 family.

The chain is Protein FAM76A (FAM76A) from Bos taurus (Bovine).